A 489-amino-acid chain; its full sequence is Type II restriction enzyme Sau3AI (489 aa).

It depends on Mg(2+) as a cofactor.

It carries out the reaction Endonucleolytic cleavage of DNA to give specific double-stranded fragments with terminal 5'-phosphates.. Its function is as follows. An E and P subtype restriction enzyme that recognizes the double-stranded sequence 5'-GATC-3' and cleaves before G-1. The protein is Type II restriction enzyme Sau3AI (sau3AIR) of Staphylococcus aureus.